The sequence spans 153 residues: Bursicon (153 aa).

A signal peptide spans 1 to 22 (MLLYHIVGASVLICLLNETAKA). Cystine bridges form between Cys29–Cys78, Cys43–Cys92, Cys53–Cys113, Cys57–Cys115, and Cys75–Cys118. The CTCK domain occupies 29-119 (CQATPVIHFL…PLECMCRPCT (91 aa)).

As to quaternary structure, heterodimer of burs and pburs.

Its subcellular location is the secreted. Final heterodimeric neurohormone released at the end of the molting cycle, involved in the sclerotization (tanning) of the insect cuticle, melanization and wing spreading. This is Bursicon from Apis mellifera (Honeybee).